A 278-amino-acid polypeptide reads, in one-letter code: MCRRPDCGFSFSPGPVILLWCCLLLPIVSSAAVSVAPTAAEKVPAECPELTRRCLLGEVFEGDKYESWLRPLVNVTGRDGPLSQLIRYRPVTPEAANSVLLDEAFLDTLALLYNNPDQLRALLTLLSSDTAPRWMTVMRGYSECGDGSPAVYTCVDDLCRGYDLTRLSYGRSIFTEHVLGFELVPPSLFNVVVAIRNEATRTNRAVRLPVSTAAAPEGITLFYGLYNAVKEFCLRHQLDPPLLRHLDKYYAGLPPELKQTRVNLPAHSRYGPQAVDAR.

A signal peptide spans 1–30 (MCRRPDCGFSFSPGPVILLWCCLLLPIVSS). The region spanning 43-256 (VPAECPELTR…DKYYAGLPPE (214 aa)) is the gL betaherpesvirus-type domain. Cysteines 154 and 159 form a disulfide.

It belongs to the herpesviridae glycoprotein L (gL) family. Betaherpesvirinae gL subfamily. As to quaternary structure, interacts with glycoprotein H (gH); this interaction is necessary for the correct processing and cell surface expression of gH. Forms the envelope pentamer complex (PC) composed of gH, gL, UL128, UL130, and UL131A. The pentamer interacts with host NRP2. Forms the envelope trimer complex composed of gH, gL, and gO. The trimer interacts with host PDGFRA. The trimer also interacts with host EPHA2.

The protein resides in the virion membrane. The protein localises to the host cell membrane. It is found in the host Golgi apparatus. Its subcellular location is the host trans-Golgi network. The heterodimer glycoprotein H-glycoprotein L is required for the fusion of viral and plasma membranes leading to virus entry into the host cell. Acts as a functional inhibitor of gH and maintains gH in an inhibited form. Upon binding to host integrins, gL dissociates from gH leading to activation of the viral fusion glycoproteins gB and gH. In human cytomegalovirus, forms two distincts complexes to mediate viral entry, a trimer and a pentamer at the surface of the virion envelope. The gH-gL-gO trimer is required for infection in fibroblasts by interacting with host PDGFRA, and in glioblastoma cells by interacting with host EPHA2. The gH-gL-UL128-UL130-UL131A pentamer is essential for viral entry in epithelial, endothelial and myeloid cells via interaction with host NRP2. In Homo sapiens (Human), this protein is Envelope glycoprotein L.